We begin with the raw amino-acid sequence, 236 residues long: Orotidine 5'-phosphate decarboxylase (236 aa).

Substrate is bound by residues D16, K38, 65–74, T123, R184, Q193, G213, and R214; that span reads DLKLHDIGNT. K67 functions as the Proton donor in the catalytic mechanism.

Belongs to the OMP decarboxylase family. Type 1 subfamily. Homodimer.

The enzyme catalyses orotidine 5'-phosphate + H(+) = UMP + CO2. It functions in the pathway pyrimidine metabolism; UMP biosynthesis via de novo pathway; UMP from orotate: step 2/2. In terms of biological role, catalyzes the decarboxylation of orotidine 5'-monophosphate (OMP) to uridine 5'-monophosphate (UMP). The sequence is that of Orotidine 5'-phosphate decarboxylase from Methylobacterium sp. (strain 4-46).